The sequence spans 1073 residues: MKLLYTEISYSMTEILVKEARAYADKGYRVFYIAPNSLSFEKERSVLALLPEQGSFAITVTRFEQMARYFTLAKAANRQALDDNGLAMIFYRVLMQLQEDELKVFHRLRTDQAFIAQLVELYKELQAANLTAFDLTTLDRPEKQEDLITIMTKAEQLIAQGDYDQSSRLAQLAEAIKSKSLDDELRQTVLVIDGFTRFSAEEEQLLALLNEACEEIVIGAYISQKAYRLAFTKGNLYEASLAFIQQLAQQFQTKPIYTTSEKVFDVSFSRLTQLLEANHDYSKLDWQLSAKDKSKVVIWQALNQKEELEYVAKAIREKLYQGYRYKDMLVLLGDVASYQLQIGPIFEKFEIPYYIGKQEPMSAHPLVQFVESLERGRRYNWRREDIVNLLKSGLFGRFQEGELDQLEQYLVFADIQGFTKFSRPFTLNSSRQYPLPLLNQLRLAVVTPLQQLFKSQKQLGASLLDKLMTFFKTIQLADNFEALAGSRREADREKDEEVWKAFTGILETFYQVFGQEKMTLADCLALIKMGMQTAHYRTVPATLDVVSIKSYDLVEPHSKPFVFAIGLSRSHFPKQTKNTSLISDQERASINEQTASYQRLDVPSFENIKKNHQTALSLFNAATQELVLSLPTSLTNSSDDVSPYLKELIALGVPVIEKGKNRLSHSAADIGNYKALLSRLVAINRQGIADDMTSEDRNFWTVALRYLKRRLADEQLSLPAFEHHLTTKPVAPEVIETRFPSHQPLSLSSSALTVFYNNQYKYFLKYVLGLQEPESIHPDARIHGQYLHRIFELVTKDRTDAAFDQKLGAAIAAVNQQSAFQQVYQADAEGRYSLEVLKGIAYSTAPVLNLNQGMQVAKQEEAFELALGHQALIRGVIDRIDQLADGRLGIVDYKSSARVFDIGAFYNGLSPQLVTYLAALKNKGQGLFGAMYLHMQEPRLSLSDFKVLDDQLVAAAYKELTYKGIFLAQAKEYLANGSYHLNNTLYETDELETLLAYNEQLYLSAVKQIKTGHFLINPYTADGKSVQGDQLKAITRFEADLDLGYARRLVVLPVKERRQAFLTRMNEEIKHED.

The protein belongs to the helicase family. AddB/RexB type 2 subfamily. As to quaternary structure, heterodimer of AddA and RexB. The cofactor is Mg(2+).

Functionally, the heterodimer acts as both an ATP-dependent DNA helicase and an ATP-dependent, dual-direction single-stranded exonuclease. Recognizes the chi site generating a DNA molecule suitable for the initiation of homologous recombination. This subunit has 5' -&gt; 3' nuclease activity but not helicase activity. The chain is ATP-dependent helicase/deoxyribonuclease subunit B from Streptococcus equi subsp. zooepidemicus (strain H70).